Consider the following 224-residue polypeptide: Myogenin (224 aa).

Phosphoserine; by CaMK2G occurs at positions 77 and 79. The region spanning 81-132 is the bHLH domain; it reads DRRRAATLREKRRLKKVNEAFEALKRSTLLNPNQRLPKVEILRSAIQYIERL. Thr-87 is modified (phosphothreonine; by CaMK2G).

Homodimer and heterodimer with E12; heterodimerization enhances MYOG DNA-binding and transcriptional activities. Interacts with SMARCA4/BRG1/BAF190A. Interacts (via C-terminal region) with SSRP1 and SUPT16H; the interaction is indicative of an interaction with the FACT complex. Interacts with CSRP3. Post-translationally, phosphorylated by CAMK2G on threonine and serine amino acids in a muscle activity-dependent manner. Phosphorylation of Thr-87 impairs both DNA-binding and trans-activation functions in contracting muscles.

The protein localises to the nucleus. Its function is as follows. Acts as a transcriptional activator that promotes transcription of muscle-specific target genes and plays a role in muscle differentiation, cell cycle exit and muscle atrophy. Essential for the development of functional embryonic skeletal fiber muscle differentiation. However is dispensable for postnatal skeletal muscle growth; phosphorylation by CAMK2G inhibits its transcriptional activity in respons to muscle activity. Required for the recruitment of the FACT complex to muscle-specific promoter regions, thus promoting gene expression initiation. During terminal myoblast differentiation, plays a role as a strong activator of transcription at loci with an open chromatin structure previously initiated by MYOD1. Together with MYF5 and MYOD1, co-occupies muscle-specific gene promoter core regions during myogenesis. Also cooperates with myocyte-specific enhancer factor MEF2D and BRG1-dependent recruitment of SWI/SNF chromatin-remodeling enzymes to alter chromatin structure at myogenic late gene promoters. Facilitates cell cycle exit during terminal muscle differentiation through the up-regulation of miR-20a expression, which in turn represses genes involved in cell cycle progression. Binds to the E-box containing (E1) promoter region of the miR-20a gene. Also plays a role in preventing reversal of muscle cell differentiation. Contributes to the atrophy-related gene expression in adult denervated muscles. Induces fibroblasts to differentiate into myoblasts. In Homo sapiens (Human), this protein is Myogenin (MYOG).